A 63-amino-acid chain; its full sequence is Small ribosomal subunit protein eS30B (63 aa).

A disordered region spans residues 1 to 35 (MAKVHGSLARAGKVKSQTPKVEKTEKPKKPKGRAY). Ser-16 is modified (phosphoserine). Thr-48 is subject to Phosphothreonine.

It belongs to the eukaryotic ribosomal protein eS30 family. As to quaternary structure, component of the small ribosomal subunit (SSU). Mature yeast ribosomes consist of a small (40S) and a large (60S) subunit. The 40S small subunit contains 1 molecule of ribosomal RNA (18S rRNA) and 33 different proteins (encoded by 57 genes). The large 60S subunit contains 3 rRNA molecules (25S, 5.8S and 5S rRNA) and 46 different proteins (encoded by 81 genes).

It localises to the cytoplasm. In terms of biological role, component of the ribosome, a large ribonucleoprotein complex responsible for the synthesis of proteins in the cell. The small ribosomal subunit (SSU) binds messenger RNAs (mRNAs) and translates the encoded message by selecting cognate aminoacyl-transfer RNA (tRNA) molecules. The large subunit (LSU) contains the ribosomal catalytic site termed the peptidyl transferase center (PTC), which catalyzes the formation of peptide bonds, thereby polymerizing the amino acids delivered by tRNAs into a polypeptide chain. The nascent polypeptides leave the ribosome through a tunnel in the LSU and interact with protein factors that function in enzymatic processing, targeting, and the membrane insertion of nascent chains at the exit of the ribosomal tunnel. The chain is Small ribosomal subunit protein eS30B from Saccharomyces cerevisiae (strain ATCC 204508 / S288c) (Baker's yeast).